Here is a 463-residue protein sequence, read N- to C-terminus: Chromosomal replication initiator protein DnaA (463 aa).

The domain I, interacts with DnaA modulators stretch occupies residues 1–84; the sequence is MNTNQIILTN…QLFQHYNNAI (84 aa). The segment at 84 to 124 is domain II; that stretch reads IKTVEIITKELPASNQATLELPTKTFADIGSSELNSENIFS. The tract at residues 125–343 is domain III, AAA+ region; that stretch reads TFDIRFTFDN…GALNKVIAHS (219 aa). ATP-binding residues include G171, G173, K174, and T175. Residues 344–463 form a domain IV, binds dsDNA region; the sequence is NFTAKEITLE…INLMMKILQN (120 aa).

The protein belongs to the DnaA family. Oligomerizes as a right-handed, spiral filament on DNA at oriC.

The protein localises to the cytoplasm. Plays an essential role in the initiation and regulation of chromosomal replication. ATP-DnaA binds to the origin of replication (oriC) to initiate formation of the DNA replication initiation complex once per cell cycle. Binds the DnaA box (a 9 base pair repeat at the origin) and separates the double-stranded (ds)DNA. Forms a right-handed helical filament on oriC DNA; dsDNA binds to the exterior of the filament while single-stranded (ss)DNA is stabiized in the filament's interior. The ATP-DnaA-oriC complex binds and stabilizes one strand of the AT-rich DNA unwinding element (DUE), permitting loading of DNA polymerase. After initiation quickly degrades to an ADP-DnaA complex that is not apt for DNA replication. Binds acidic phospholipids. This Rickettsia bellii (strain OSU 85-389) protein is Chromosomal replication initiator protein DnaA.